We begin with the raw amino-acid sequence, 275 residues long: MDTILVFSLIIASYDANKKDLRDSSCRLEQLPGIFPKDVRSIRELQMQETHTETKRTTFIQNRTIATLQCLGSDSKVKVNLVYLERRPKVKHILKNLRIIAAPRRNSSASSSCHLIPTSKFQTGSLLKGKAFLPGISQCKVLGASSETFPTTAPSITPGNKEGEKTTSTDTDENLEKRQKWSIVVKILIAVTLLLSGVAIIVFVIFEVPCPYQCLGARKLCQCQWLWRWQKKGGQPPGTAESKPDSQPQKVGQDAANSSNPKKAAEITVIHQTYF.

Residues 148–158 (TFPTTAPSITP) show a composition bias toward polar residues. Residues 148-173 (TFPTTAPSITPGNKEGEKTTSTDTDE) are disordered. A helical transmembrane segment spans residues 187–207 (ILIAVTLLLSGVAIIVFVIFE). The disordered stretch occupies residues 234 to 264 (GQPPGTAESKPDSQPQKVGQDAANSSNPKKA). A compositionally biased stretch (polar residues) spans 245–261 (DSQPQKVGQDAANSSNP).

Its subcellular location is the membrane. This is an uncharacterized protein from Homo sapiens (Human).